Consider the following 432-residue polypeptide: Enolase (432 aa).

Position 167 (Gln-167) interacts with (2R)-2-phosphoglycerate. The active-site Proton donor is Glu-209. Residues Asp-246, Glu-291, and Asp-318 each contribute to the Mg(2+) site. Positions 343, 372, 373, and 394 each coordinate (2R)-2-phosphoglycerate. Lys-343 serves as the catalytic Proton acceptor.

It belongs to the enolase family. As to quaternary structure, component of the RNA degradosome, a multiprotein complex involved in RNA processing and mRNA degradation. It depends on Mg(2+) as a cofactor.

It is found in the cytoplasm. The protein resides in the secreted. Its subcellular location is the cell surface. The catalysed reaction is (2R)-2-phosphoglycerate = phosphoenolpyruvate + H2O. The protein operates within carbohydrate degradation; glycolysis; pyruvate from D-glyceraldehyde 3-phosphate: step 4/5. Catalyzes the reversible conversion of 2-phosphoglycerate (2-PG) into phosphoenolpyruvate (PEP). It is essential for the degradation of carbohydrates via glycolysis. The protein is Enolase of Aliivibrio salmonicida (strain LFI1238) (Vibrio salmonicida (strain LFI1238)).